The primary structure comprises 443 residues: Thymidine phosphorylase (443 aa).

The protein belongs to the thymidine/pyrimidine-nucleoside phosphorylase family. In terms of assembly, homodimer.

It catalyses the reaction thymidine + phosphate = 2-deoxy-alpha-D-ribose 1-phosphate + thymine. It participates in pyrimidine metabolism; dTMP biosynthesis via salvage pathway; dTMP from thymine: step 1/2. Functionally, the enzymes which catalyze the reversible phosphorolysis of pyrimidine nucleosides are involved in the degradation of these compounds and in their utilization as carbon and energy sources, or in the rescue of pyrimidine bases for nucleotide synthesis. The sequence is that of Thymidine phosphorylase from Shewanella oneidensis (strain ATCC 700550 / JCM 31522 / CIP 106686 / LMG 19005 / NCIMB 14063 / MR-1).